The following is a 192-amino-acid chain: MLISDRDIRRHLDSGRVRLEPSDPAMVQPASVDVRLDRWFRLFDNHKYAHIDPEQEQPELTRLVEVAPDEPFVLHPGEFVLGATYEKVTLPDDIAARLEGKSSLGRLGLLTHSTAGFIDPGFSGHVTLELSNMATLPIKLWPGSKVGQLCFFQLSSPTEHPYGSGAYGNRYQGQRGPTASRSHLNFHRTVIE.

Residues Lys-101–Arg-106, Asp-119, Thr-127–Glu-129, Gln-148, Tyr-162, and Gln-174 contribute to the dCTP site. Catalysis depends on Glu-129, which acts as the Proton donor/acceptor. The disordered stretch occupies residues Gly-165–Leu-184. A compositionally biased stretch (polar residues) spans Tyr-171–His-183.

Belongs to the dCTP deaminase family. As to quaternary structure, homotrimer.

The enzyme catalyses dCTP + 2 H2O = dUMP + NH4(+) + diphosphate. It participates in pyrimidine metabolism; dUMP biosynthesis; dUMP from dCTP: step 1/1. Bifunctional enzyme that catalyzes both the deamination of dCTP to dUTP and the hydrolysis of dUTP to dUMP without releasing the toxic dUTP intermediate. The chain is dCTP deaminase, dUMP-forming from Kocuria rhizophila (strain ATCC 9341 / DSM 348 / NBRC 103217 / DC2201).